We begin with the raw amino-acid sequence, 495 residues long: Nuclear receptor subfamily 6 group A member 1 (495 aa).

The tract at residues 1–34 (MERDERPPSGGGGGGGSAGFLEPPAALPPPPRNG) is disordered. Positions 9-18 (SGGGGGGGSA) are enriched in gly residues. A DNA-binding region (nuclear receptor) is located at residues 72–147 (QRTCLICGDR…MGMNRKAIRE (76 aa)). Residues Cys75, Cys78, Cys92, Cys95, Cys111, Cys117, Cys127, and Cys130 each contribute to the Zn(2+) site. 2 NR C4-type zinc fingers span residues 75–95 (CLIC…CEGC) and 111–135 (CSRD…LLKC). 2 disordered regions span residues 145–165 (IRED…QISE) and 177–214 (FEEE…LSSS). Residues 180–192 (EANHWSNHGDSDH) are compositionally biased toward basic and acidic residues. Residues 187–268 (HGDSDHSSPG…RSLDPQSYSL (82 aa)) are sufficient for interaction with UIMC1. A compositionally biased stretch (low complexity) spans 202 to 214 (SNQPSPGSTLSSS). Positions 264 to 495 (QSYSLIHQLM…HSCKTSTVKE (232 aa)) constitute an NR LBD domain.

It belongs to the nuclear hormone receptor family. NR6 subfamily. In terms of assembly, homodimer. Interacts with UIMC1. As to expression, expressed in the germ cells of both the adult testis and ovary, being most abundant in spermatids.

The protein resides in the nucleus. Its function is as follows. Orphan nuclear receptor that binds to a response element containing the sequence 5'-TCAAGGTCA-3'. Acts as a regulator of embryonic stem cell pluripotency by mediating repression of POU5F1/OCT4: binds to the DR0 element within the POU5F1/OCT4 promoter and inhibits POU5F1/OCT4 expression during embryonic stem cell differentiation. Required to restrict POU5F1/OCT4 expression to the germ cell lineage. Involved in the regulation of gene expression in germ cell development during gametogenesis. This Mus musculus (Mouse) protein is Nuclear receptor subfamily 6 group A member 1 (Nr6a1).